The following is a 71-amino-acid chain: Translation initiation factor IF-1 (71 aa).

Residues 1–71 enclose the S1-like domain; sequence MSKDDLIQFT…LTKGRVIHRH (71 aa).

Belongs to the IF-1 family. In terms of assembly, component of the 30S ribosomal translation pre-initiation complex which assembles on the 30S ribosome in the order IF-2 and IF-3, IF-1 and N-formylmethionyl-tRNA(fMet); mRNA recruitment can occur at any time during PIC assembly.

It is found in the cytoplasm. Its function is as follows. One of the essential components for the initiation of protein synthesis. Stabilizes the binding of IF-2 and IF-3 on the 30S subunit to which N-formylmethionyl-tRNA(fMet) subsequently binds. Helps modulate mRNA selection, yielding the 30S pre-initiation complex (PIC). Upon addition of the 50S ribosomal subunit IF-1, IF-2 and IF-3 are released leaving the mature 70S translation initiation complex. This is Translation initiation factor IF-1 from Rickettsia canadensis (strain McKiel).